The following is a 426-amino-acid chain: Squamosa promoter-binding-like protein 10 (426 aa).

Residues 178–255 (PPRCQAEGCK…AEHNRRRRKP (78 aa)) form an SBP-type zinc finger. Zn(2+)-binding residues include Cys181, Cys186, Cys203, His206, Cys222, Cys225, His229, and Cys241. The Bipartite nuclear localization signal signature appears at 238-254 (KRSCRKRLAEHNRRRRK). 2 stretches are compositionally biased toward low complexity: residues 268–287 (DAAA…AATS) and 401–417 (SDQN…NNNN). Disordered stretches follow at residues 268–290 (DAAA…SYTG) and 392–426 (PSTA…VDFM).

As to expression, expressed in stems, leaf sheaths, and young panicles.

It is found in the nucleus. In terms of biological role, trans-acting factor that binds specifically to the consensus nucleotide sequence 5'-TNCGTACAA-3'. The chain is Squamosa promoter-binding-like protein 10 (SPL10) from Oryza sativa subsp. indica (Rice).